A 560-amino-acid polypeptide reads, in one-letter code: 2-hydroxyacyl-CoA lyase (560 aa).

Glu-49 contacts thiamine diphosphate. Asp-446 and Asn-473 together coordinate Mg(2+). The Peroxisomal target signal 1 (PTS1) motif lies at 558 to 560; sequence PRL.

This sequence belongs to the TPP enzyme family. Mg(2+) serves as cofactor. Requires thiamine diphosphate as cofactor.

It localises to the cytoplasm. It is found in the peroxisome matrix. It carries out the reaction an (R)-2-hydroxy-long-chain-fatty acyl-CoA = a long-chain fatty aldehyde + formyl-CoA. It catalyses the reaction a 2-hydroxy-3-methyl fatty acyl-CoA = a 2-methyl-branched fatty aldehyde + formyl-CoA. Its function is as follows. Catalyzes a carbon-carbon cleavage reaction; cleaves a 2-hydroxy-3-methylacyl-CoA into formyl-CoA and a 2-methyl-branched fatty aldehyde. This Saccharomyces cerevisiae (strain ATCC 204508 / S288c) (Baker's yeast) protein is 2-hydroxyacyl-CoA lyase.